We begin with the raw amino-acid sequence, 407 residues long: Ribosomal protein uL3-like (407 aa).

The segment covering 1–31 (MSHRKFSAPRHGHLGFLPHKRSHRHRGKVKT) has biased composition (basic residues). Disordered stretches follow at residues 1-35 (MSHR…WPRD) and 387-407 (AFMG…SGDL).

Belongs to the universal ribosomal protein uL3 family. In terms of assembly, component of the large ribosomal subunit in striated muscle cells.

In terms of biological role, heart- and skeletal muscle-specific component of the ribosome, which regulates muscle function. Component of the large ribosomal subunit in striated muscle cells: replaces the RPL3 paralog in the ribosome in these cells. The ribosome is a large ribonucleoprotein complex responsible for the synthesis of proteins in the cell. Inhibits myotube growth and muscle function. This is Ribosomal protein uL3-like from Homo sapiens (Human).